The chain runs to 246 residues: 1-(5-phosphoribosyl)-5-[(5-phosphoribosylamino)methylideneamino] imidazole-4-carboxamide isomerase (246 aa).

The active-site Proton acceptor is the D8. D129 functions as the Proton donor in the catalytic mechanism.

It belongs to the HisA/HisF family.

It is found in the cytoplasm. The enzyme catalyses 1-(5-phospho-beta-D-ribosyl)-5-[(5-phospho-beta-D-ribosylamino)methylideneamino]imidazole-4-carboxamide = 5-[(5-phospho-1-deoxy-D-ribulos-1-ylimino)methylamino]-1-(5-phospho-beta-D-ribosyl)imidazole-4-carboxamide. Its pathway is amino-acid biosynthesis; L-histidine biosynthesis; L-histidine from 5-phospho-alpha-D-ribose 1-diphosphate: step 4/9. In Desulforamulus reducens (strain ATCC BAA-1160 / DSM 100696 / MI-1) (Desulfotomaculum reducens), this protein is 1-(5-phosphoribosyl)-5-[(5-phosphoribosylamino)methylideneamino] imidazole-4-carboxamide isomerase.